The following is a 154-amino-acid chain: Phospholipase A2 OS1 (154 aa).

An N-terminal signal peptide occupies residues 1–27; the sequence is MHPAHLLVLLAVCVSLLGAARIPPLPL. 7 disulfide bridges follow: Cys38–Cys104, Cys54–Cys153, Cys56–Cys72, Cys71–Cys132, Cys78–Cys125, Cys88–Cys118, and Cys111–Cys123. Positions 57 and 59 each coordinate Ca(2+). His75 is a catalytic residue. Asp76 contributes to the Ca(2+) binding site. Residue Asp126 is part of the active site.

This sequence belongs to the phospholipase A2 family. Group I subfamily. D49 sub-subfamily. In terms of assembly, monomer. Requires Ca(2+) as cofactor. In terms of tissue distribution, expressed by the venom gland.

It localises to the secreted. The enzyme catalyses a 1,2-diacyl-sn-glycero-3-phosphocholine + H2O = a 1-acyl-sn-glycero-3-phosphocholine + a fatty acid + H(+). Functionally, snake venom phospholipase A2 (PLA2) that has a low specific activity on phospholipid substrates, and is neither neurotoxic, nor myotoxic. Induces endothelial cell migration which is mediated, at least in part, by its hydrolytic products. Shows antimalarial activity, but is not able to potently inhibit HIV-1 replication. Binds in a calcium-independent fashion with very high affinity to a muscle-type (M-type) PLA2 receptor, but is a very poor ligand for neuronal-type (N-type) receptors. PLA2 catalyzes the calcium-dependent hydrolysis of the 2-acyl groups in 3-sn-phosphoglycerides. The polypeptide is Phospholipase A2 OS1 (Oxyuranus scutellatus scutellatus (Australian taipan)).